A 304-amino-acid chain; its full sequence is Homoserine kinase (304 aa).

91–101 (PLGKGMGSSAA) contributes to the ATP binding site.

Belongs to the GHMP kinase family. Homoserine kinase subfamily.

The protein resides in the cytoplasm. It catalyses the reaction L-homoserine + ATP = O-phospho-L-homoserine + ADP + H(+). The protein operates within amino-acid biosynthesis; L-threonine biosynthesis; L-threonine from L-aspartate: step 4/5. Catalyzes the ATP-dependent phosphorylation of L-homoserine to L-homoserine phosphate. The sequence is that of Homoserine kinase from Solibacter usitatus (strain Ellin6076).